The chain runs to 392 residues: Chaperone protein DnaJ 1 (392 aa).

Positions 4–67 (DYYEILGVSH…QKRAVFDRGG (64 aa)) constitute a J domain. The segment at 134–216 (GVTKSLEVDT…CSGEGRVRTT (83 aa)) adopts a CR-type zinc-finger fold. The Zn(2+) site is built by cysteine 147, cysteine 150, cysteine 164, cysteine 167, cysteine 190, cysteine 193, cysteine 204, and cysteine 207. 4 CXXCXGXG motif repeats span residues 147 to 154 (CPKCQGKG), 164 to 171 (CDTCQGRG), 190 to 197 (CPTCHGYG), and 204 to 211 (CQECSGEG). The segment at 367-392 (ETNASASVEKSGGRGMFSRIKEAFGG) is disordered.

Belongs to the DnaJ family. As to quaternary structure, homodimer. Zn(2+) serves as cofactor.

Its subcellular location is the cytoplasm. In terms of biological role, participates actively in the response to hyperosmotic and heat shock by preventing the aggregation of stress-denatured proteins and by disaggregating proteins, also in an autonomous, DnaK-independent fashion. Unfolded proteins bind initially to DnaJ; upon interaction with the DnaJ-bound protein, DnaK hydrolyzes its bound ATP, resulting in the formation of a stable complex. GrpE releases ADP from DnaK; ATP binding to DnaK triggers the release of the substrate protein, thus completing the reaction cycle. Several rounds of ATP-dependent interactions between DnaJ, DnaK and GrpE are required for fully efficient folding. Also involved, together with DnaK and GrpE, in the DNA replication of plasmids through activation of initiation proteins. This chain is Chaperone protein DnaJ 1, found in Cutibacterium acnes (strain DSM 16379 / KPA171202) (Propionibacterium acnes).